A 59-amino-acid polypeptide reads, in one-letter code: Gonadotropin-releasing hormone receptor (59 aa).

Residues 1-2 lie on the Cytoplasmic side of the membrane; the sequence is VA. A helical membrane pass occupies residues 3–23; that stretch reads FATSFTVCWTPYYVLGIWYWF. Over 24–37 the chain is Extracellular; it reads DPEMLNRVSDPVNH. The helical transmembrane segment at 38–58 threads the bilayer; the sequence is FFFLFAFLNPCFDPLIYGYFS. Position 59 (L59) is a topological domain, cytoplasmic.

It belongs to the G-protein coupled receptor 1 family.

The protein resides in the cell membrane. Functionally, receptor for gonadotropin releasing hormone (GnRH) that mediates the action of GnRH to stimulate the secretion of the gonadotropic hormones luteinizing hormone (LH) and follicle-stimulating hormone (FSH). This receptor mediates its action by association with G-proteins that activate a phosphatidylinositol-calcium second messenger system. This Macaca mulatta (Rhesus macaque) protein is Gonadotropin-releasing hormone receptor (GNRHR).